The sequence spans 164 residues: Putative Cys-tRNA(Pro)/Cys-tRNA(Cys) deacylase EbsC (164 aa).

Belongs to the prolyl-tRNA editing family. YbaK/EbsC subfamily.

Affects the expression of the receptor, named binding substance, that mediates mating aggregate formation. Could be a regulatory protein that suppresses the function or expression of ebsA and/or ebsMB. The sequence is that of Putative Cys-tRNA(Pro)/Cys-tRNA(Cys) deacylase EbsC from Enterococcus faecalis (strain ATCC 700802 / V583).